Reading from the N-terminus, the 269-residue chain is Tryptophan synthase alpha chain (269 aa).

Residues Glu-49 and Asp-60 each act as proton acceptor in the active site.

This sequence belongs to the TrpA family. In terms of assembly, tetramer of two alpha and two beta chains.

It carries out the reaction (1S,2R)-1-C-(indol-3-yl)glycerol 3-phosphate + L-serine = D-glyceraldehyde 3-phosphate + L-tryptophan + H2O. It functions in the pathway amino-acid biosynthesis; L-tryptophan biosynthesis; L-tryptophan from chorismate: step 5/5. In terms of biological role, the alpha subunit is responsible for the aldol cleavage of indoleglycerol phosphate to indole and glyceraldehyde 3-phosphate. This Azotobacter vinelandii (strain DJ / ATCC BAA-1303) protein is Tryptophan synthase alpha chain.